The sequence spans 250 residues: Ribonuclease HII (250 aa).

Positions 66-250 (ELVAGVDEVG…TFAPVSDFFK (185 aa)) constitute an RNase H type-2 domain. Residues Asp-72, Glu-73, and Asp-164 each contribute to the a divalent metal cation site.

The protein belongs to the RNase HII family. Mn(2+) is required as a cofactor. Mg(2+) serves as cofactor.

The protein resides in the cytoplasm. It carries out the reaction Endonucleolytic cleavage to 5'-phosphomonoester.. Functionally, endonuclease that specifically degrades the RNA of RNA-DNA hybrids. In Lactobacillus helveticus (strain DPC 4571), this protein is Ribonuclease HII.